Here is a 480-residue protein sequence, read N- to C-terminus: Histone-lysine N-methyltransferase ASHR1 (480 aa).

In terms of domain architecture, SET spans Arg-11–Ile-248. 8 residues coordinate Zn(2+): Cys-56, Cys-59, Cys-68, Cys-71, Cys-77, Cys-81, His-89, and Cys-93. The MYND-type zinc finger occupies Cys-56 to Cys-93.

It belongs to the class V-like SAM-binding methyltransferase superfamily. Histone-lysine methyltransferase family. SET2 subfamily.

The protein resides in the nucleus. It localises to the chromosome. The enzyme catalyses L-lysyl-[histone] + S-adenosyl-L-methionine = N(6)-methyl-L-lysyl-[histone] + S-adenosyl-L-homocysteine + H(+). Functionally, histone methyltransferase. The protein is Histone-lysine N-methyltransferase ASHR1 (ASHR1) of Arabidopsis thaliana (Mouse-ear cress).